Reading from the N-terminus, the 101-residue chain is NADH-quinone oxidoreductase subunit K (101 aa).

3 consecutive transmembrane segments (helical) span residues 4 to 24, 30 to 50, and 61 to 81; these read LADY…GIFI, LVLL…FIAF, and VFVF…LAIV.

Belongs to the complex I subunit 4L family. As to quaternary structure, NDH-1 is composed of 14 different subunits. Subunits NuoA, H, J, K, L, M, N constitute the membrane sector of the complex.

It localises to the cell inner membrane. The catalysed reaction is a quinone + NADH + 5 H(+)(in) = a quinol + NAD(+) + 4 H(+)(out). Functionally, NDH-1 shuttles electrons from NADH, via FMN and iron-sulfur (Fe-S) centers, to quinones in the respiratory chain. The immediate electron acceptor for the enzyme in this species is believed to be ubiquinone. Couples the redox reaction to proton translocation (for every two electrons transferred, four hydrogen ions are translocated across the cytoplasmic membrane), and thus conserves the redox energy in a proton gradient. The sequence is that of NADH-quinone oxidoreductase subunit K from Alkalilimnicola ehrlichii (strain ATCC BAA-1101 / DSM 17681 / MLHE-1).